An 84-amino-acid polypeptide reads, in one-letter code: Apovitellenin-1 (84 aa).

It belongs to the apovitellenin family. In terms of assembly, monomer.

Functionally, protein component of the very low density lipoprotein (VLDL) of egg-laying females. Potent lipoprotein lipase inhibitor, preventing the loss of triglycerides from VLDL on their way from the liver to the growing oocytes. This chain is Apovitellenin-1, found in Dromaius novaehollandiae (Emu).